The chain runs to 74 residues: Protein translocase subunit SecE (74 aa).

The Cytoplasmic portion of the chain corresponds to 1–36 (MKTDFNQKIEQLKEFIEECRRVWLVLKKPTKDEYLA). A helical transmembrane segment spans residues 37–62 (VAKVTALGISLLGIIGYIIHVPATYI). Residues 63-74 (KGILKPPTTPRV) lie on the Extracellular side of the membrane.

Belongs to the SecE/SEC61-gamma family. In terms of assembly, component of the Sec protein translocase complex. Heterotrimer consisting of alpha (SecY), beta (SecG) and gamma (SecE) subunits. The heterotrimers can form oligomers, although 1 heterotrimer is thought to be able to translocate proteins. Interacts with the ribosome. May interact with SecDF, and other proteins may be involved.

The protein localises to the cell membrane. In terms of biological role, essential subunit of the protein translocation channel SecYEG. Clamps together the 2 halves of SecY. May contact the channel plug during translocation. The chain is Protein translocase subunit SecE from Methanocaldococcus jannaschii (strain ATCC 43067 / DSM 2661 / JAL-1 / JCM 10045 / NBRC 100440) (Methanococcus jannaschii).